We begin with the raw amino-acid sequence, 142 residues long: Glia maturation factor beta (142 aa).

Ser2 bears the N-acetylserine mark. Residues 4–139 enclose the ADF-H domain; the sequence is SLVVCDVAED…TEEWLREKLG (136 aa).

This sequence belongs to the actin-binding proteins ADF family. GMF subfamily. Phosphorylated; stimulated by phorbol ester.

This protein causes differentiation of brain cells, stimulation of neural regeneration, and inhibition of proliferation of tumor cells. The sequence is that of Glia maturation factor beta (Gmfb) from Rattus norvegicus (Rat).